Consider the following 129-residue polypeptide: HTH-type transcriptional regulator DdrOP3 (129 aa).

Positions 7–61 (LRELRQERGLRLKDIAGAAQISVPYLSDLERGRTNPSLETLQSLASTYGITVHDL) constitute an HTH cro/C1-type domain. Positions 18-37 (LKDIAGAAQISVPYLSDLER) form a DNA-binding region, H-T-H motif.

Cleaved between Leu-106 and Arg-107 by the IrrE metalloprotease after exposure to radiation. Cleavage inactivates DdrOP3, leading to derepression of the target genes.

Its function is as follows. Repressor specific for genes preceded by a radiation/desiccation response motif (RDRM) site, which is present upstream of several radiation-induced genes. In Deinococcus deserti (strain DSM 17065 / CIP 109153 / LMG 22923 / VCD115), this protein is HTH-type transcriptional regulator DdrOP3.